A 216-amino-acid chain; its full sequence is 7-carboxy-7-deazaguanine synthase (216 aa).

Residues 12–14 (LQG) and arginine 27 each bind substrate. In terms of domain architecture, Radical SAM core spans 18–216 (RAGRAAVFCR…LQTHKYLGIP (199 aa)). Cysteine 31, cysteine 46, and cysteine 49 together coordinate [4Fe-4S] cluster. Mg(2+) is bound at residue threonine 51. Threonine 93 contacts substrate. S-adenosyl-L-methionine-binding positions include glycine 95, 136-138 (SPK), and 176-179 (QPRD). Substrate is bound at residue proline 216.

It belongs to the radical SAM superfamily. 7-carboxy-7-deazaguanine synthase family. In terms of assembly, homodimer. [4Fe-4S] cluster is required as a cofactor. It depends on S-adenosyl-L-methionine as a cofactor. The cofactor is Mg(2+).

The enzyme catalyses 6-carboxy-5,6,7,8-tetrahydropterin + H(+) = 7-carboxy-7-deazaguanine + NH4(+). The protein operates within purine metabolism; 7-cyano-7-deazaguanine biosynthesis. Its function is as follows. Catalyzes the complex heterocyclic radical-mediated conversion of 6-carboxy-5,6,7,8-tetrahydropterin (CPH4) to 7-carboxy-7-deazaguanine (CDG), a step common to the biosynthetic pathways of all 7-deazapurine-containing compounds. This Nitratidesulfovibrio vulgaris (strain ATCC 29579 / DSM 644 / CCUG 34227 / NCIMB 8303 / VKM B-1760 / Hildenborough) (Desulfovibrio vulgaris) protein is 7-carboxy-7-deazaguanine synthase.